The primary structure comprises 321 residues: Coproporphyrin III ferrochelatase (321 aa).

The Fe(2+) site is built by H185 and E267.

The protein belongs to the ferrochelatase family.

The protein localises to the cytoplasm. The catalysed reaction is Fe-coproporphyrin III + 2 H(+) = coproporphyrin III + Fe(2+). It functions in the pathway porphyrin-containing compound metabolism; protoheme biosynthesis. Its function is as follows. Involved in coproporphyrin-dependent heme b biosynthesis. Catalyzes the insertion of ferrous iron into coproporphyrin III to form Fe-coproporphyrin III. This chain is Coproporphyrin III ferrochelatase, found in Lacticaseibacillus paracasei (strain ATCC 334 / BCRC 17002 / CCUG 31169 / CIP 107868 / KCTC 3260 / NRRL B-441) (Lactobacillus paracasei).